Reading from the N-terminus, the 349-residue chain is Methylthioribose-1-phosphate isomerase (349 aa).

Residues 51 to 53 (RGA), R94, and Q199 each bind substrate. The active-site Proton donor is the D240. 250 to 251 (NK) provides a ligand contact to substrate.

It belongs to the eIF-2B alpha/beta/delta subunits family. MtnA subfamily. Homodimer.

The enzyme catalyses 5-(methylsulfanyl)-alpha-D-ribose 1-phosphate = 5-(methylsulfanyl)-D-ribulose 1-phosphate. It functions in the pathway amino-acid biosynthesis; L-methionine biosynthesis via salvage pathway; L-methionine from S-methyl-5-thio-alpha-D-ribose 1-phosphate: step 1/6. Its function is as follows. Catalyzes the interconversion of methylthioribose-1-phosphate (MTR-1-P) into methylthioribulose-1-phosphate (MTRu-1-P). This chain is Methylthioribose-1-phosphate isomerase, found in Bacillus cytotoxicus (strain DSM 22905 / CIP 110041 / 391-98 / NVH 391-98).